The following is a 60-amino-acid chain: Large ribosomal subunit protein uL30 (60 aa).

This sequence belongs to the universal ribosomal protein uL30 family. Part of the 50S ribosomal subunit.

This Streptomyces avermitilis (strain ATCC 31267 / DSM 46492 / JCM 5070 / NBRC 14893 / NCIMB 12804 / NRRL 8165 / MA-4680) protein is Large ribosomal subunit protein uL30.